The primary structure comprises 332 residues: Probable xyloglucan endotransglucosylase/hydrolase protein 28 (332 aa).

A signal peptide spans 1-22 (MGFITRFLVFMSLFTSLVSGFA). Residues 23–223 (LQKLPLIQFD…YKYAPYVSQF (201 aa)) enclose the GH16 domain. E108 acts as the Nucleophile in catalysis. The active-site Proton donor is E112. Xyloglucan is bound by residues E112 and 125–127 (QTN). An N-linked (GlcNAc...) asparagine glycan is attached at N131. Xyloglucan-binding positions include 135–139 (HLGRE), 202–203 (KW), G207, and R282. A disulfide bond links C277 and C290. The segment covering 313 to 326 (HGHRRGKHRSRSRL) has biased composition (basic residues). The segment at 313–332 (HGHRRGKHRSRSRLARTESI) is disordered.

The protein belongs to the glycosyl hydrolase 16 family. XTH group 3 subfamily. Contains at least one intrachain disulfide bond essential for its enzymatic activity. Expressed in 7 day old seedlings, roots, rosette leaves, internodes between nodes bearing axillary shoots, nodes bearing flowers, flower buds and siliques.

Its subcellular location is the secreted. The protein resides in the cell wall. It is found in the extracellular space. It localises to the apoplast. It carries out the reaction breaks a beta-(1-&gt;4) bond in the backbone of a xyloglucan and transfers the xyloglucanyl segment on to O-4 of the non-reducing terminal glucose residue of an acceptor, which can be a xyloglucan or an oligosaccharide of xyloglucan.. Its function is as follows. Catalyzes xyloglucan endohydrolysis (XEH) and/or endotransglycosylation (XET). Cleaves and religates xyloglucan polymers, an essential constituent of the primary cell wall, and thereby participates in cell wall construction of growing tissues. The chain is Probable xyloglucan endotransglucosylase/hydrolase protein 28 (XTH28) from Arabidopsis thaliana (Mouse-ear cress).